Consider the following 194-residue polypeptide: Small COPII coat GTPase SAR1B (194 aa).

An STAR; SAR1-N-terminal activation recruitment. Required for the activation and subsequent recruitment to ER membrane motif is present at residues 2-4 (FLV). Residues 10 to 14 (MFLWL) are mediates recruitment to ER membranes. GDP-binding residues include Asn-30, Ala-31, Gly-32, Lys-33, Thr-34, and Thr-35. Residue Asn-30 participates in GTP binding. 4 residues coordinate GTP: Gly-32, Lys-33, Thr-34, and Thr-35. Asp-70 is a Mg(2+) binding site. GDP-binding residues include Lys-131, Asp-133, and Ile-172. GTP contacts are provided by Lys-131, Asp-133, and Ile-172.

It belongs to the small GTPase superfamily. SAR1 family. In terms of assembly, homodimer; upon association with membrane. Part of the coat protein complex II/COPII, composed of SEC23/24 and SEC13/31 heterodimers, that it helps recruit and assemble on endoplasmic reticulum (ER) membranes at ER exit sites.

The protein localises to the endoplasmic reticulum membrane. It localises to the golgi apparatus. Its subcellular location is the golgi stack membrane. It is found in the cytoplasm. The protein resides in the cytosol. The enzyme catalyses GTP + H2O = GDP + phosphate + H(+). Its activity is regulated as follows. Small GTPases activation is mediated by guanine exchange factors (GEF), while inactivation through hydrolysis of the bound GTP is stimulated by GTPase activating proteins (GAP). Functionally, small GTPase that cycles between an active GTP-bound and an inactive GDP-bound state and mainly functions in vesicle-mediated endoplasmic reticulum (ER) to Golgi transport. The active GTP-bound form inserts into the endoplasmic reticulum membrane where it recruits the remainder of the coat protein complex II/COPII. The coat protein complex II assembling and polymerizing on endoplasmic reticulum membrane is responsible for both the sorting of cargos and the deformation and budding of membranes into vesicles destined to the Golgi. In Dictyostelium discoideum (Social amoeba), this protein is Small COPII coat GTPase SAR1B (sarB).